The primary structure comprises 786 residues: Endonuclease MutS2 (786 aa).

ATP is bound at residue 332–339 (GPNTGGKT). One can recognise a Smr domain in the interval 711-786 (IDLRGMDSME…GTGVTVVELK (76 aa)).

Belongs to the DNA mismatch repair MutS family. MutS2 subfamily. As to quaternary structure, homodimer. Binds to stalled ribosomes, contacting rRNA.

In terms of biological role, endonuclease that is involved in the suppression of homologous recombination and thus may have a key role in the control of bacterial genetic diversity. Functionally, acts as a ribosome collision sensor, splitting the ribosome into its 2 subunits. Detects stalled/collided 70S ribosomes which it binds and splits by an ATP-hydrolysis driven conformational change. Acts upstream of the ribosome quality control system (RQC), a ribosome-associated complex that mediates the extraction of incompletely synthesized nascent chains from stalled ribosomes and their subsequent degradation. Probably generates substrates for RQC. The polypeptide is Endonuclease MutS2 (Clostridium tetani (strain Massachusetts / E88)).